The primary structure comprises 102 residues: Small ribosomal subunit protein uS10 (102 aa).

This sequence belongs to the universal ribosomal protein uS10 family. As to quaternary structure, part of the 30S ribosomal subunit.

In terms of biological role, involved in the binding of tRNA to the ribosomes. This is Small ribosomal subunit protein uS10 from Listeria innocua serovar 6a (strain ATCC BAA-680 / CLIP 11262).